We begin with the raw amino-acid sequence, 317 residues long: Melanocyte-stimulating hormone receptor (317 aa).

Over Met1–Glu37 the chain is Extracellular. The N-linked (GlcNAc...) asparagine glycan is linked to Asn29. Residues Val38 to Ile63 traverse the membrane as a helical segment. The Cytoplasmic portion of the chain corresponds to Ala64–Pro72. The chain crosses the membrane as a helical span at residues Met73–Leu93. The Extracellular segment spans residues Glu94–Asn118. The helical transmembrane segment at Ile119–Val140 threads the bilayer. Residues Asp141–Arg163 lie on the Cytoplasmic side of the membrane. The chain crosses the membrane as a helical span at residues Ala164 to Tyr183. Over Asn184–Cys191 the chain is Extracellular. The chain crosses the membrane as a helical span at residues Leu192–Leu211. Residues Ala212 to Ala240 lie on the Cytoplasmic side of the membrane. A helical membrane pass occupies residues Ala241–Leu266. The Extracellular portion of the chain corresponds to Cys267–Asn279. A helical transmembrane segment spans residues Phe280–Phe300. The Cytoplasmic portion of the chain corresponds to Arg301 to Trp317. The S-palmitoyl cysteine moiety is linked to residue Cys315.

It belongs to the G-protein coupled receptor 1 family. As to quaternary structure, interacts with MGRN1, but does not undergo MGRN1-mediated ubiquitination; this interaction competes with GNAS-binding and thus inhibits agonist-induced cAMP production. Interacts with OPN3; the interaction results in a decrease in MC1R-mediated cAMP signaling and ultimately a decrease in melanin production in melanocytes.

It localises to the cell membrane. Receptor for MSH (alpha, beta and gamma) and ACTH. The activity of this receptor is mediated by G proteins which activate adenylate cyclase. Mediates melanogenesis, the production of eumelanin (black/brown) and phaeomelanin (red/yellow), via regulation of cAMP signaling in melanocytes. This Equus caballus (Horse) protein is Melanocyte-stimulating hormone receptor (MC1R).